A 412-amino-acid polypeptide reads, in one-letter code: Protein MITOFERRINLIKE 1, chloroplastic (412 aa).

Residues Met1 to Lys92 constitute a chloroplast transit peptide. The disordered stretch occupies residues Val43 to Pro83. Solcar repeat units follow at residues Glu112–Leu198, Pro206–Ala288, and Leu298–Thr392. Helical transmembrane passes span Ile115–Leu135, Ile167–Val187, Val208–Pro228, Ala262–Phe282, Ser303–Val323, and Thr365–Ala385.

Belongs to the mitochondrial carrier (TC 2.A.29) family. As to expression, expressed in leaves, developing flowers and siliques.

The protein localises to the plastid. It localises to the chloroplast inner membrane. In terms of biological role, probably involved in iron transport into chloroplasts. The chain is Protein MITOFERRINLIKE 1, chloroplastic (MFL1) from Arabidopsis thaliana (Mouse-ear cress).